The sequence spans 433 residues: Glutamate-1-semialdehyde 2,1-aminomutase (433 aa).

Residue K273 is modified to N6-(pyridoxal phosphate)lysine.

The protein belongs to the class-III pyridoxal-phosphate-dependent aminotransferase family. HemL subfamily. Homodimer. The cofactor is pyridoxal 5'-phosphate.

The protein resides in the cytoplasm. The catalysed reaction is (S)-4-amino-5-oxopentanoate = 5-aminolevulinate. The protein operates within porphyrin-containing compound metabolism; protoporphyrin-IX biosynthesis; 5-aminolevulinate from L-glutamyl-tRNA(Glu): step 2/2. It participates in porphyrin-containing compound metabolism; chlorophyll biosynthesis. This is Glutamate-1-semialdehyde 2,1-aminomutase (hemL) from Synechocystis sp. (strain ATCC 27184 / PCC 6803 / Kazusa).